Reading from the N-terminus, the 293-residue chain is C-type lectin domain family 4 member G (293 aa).

Residues 1-31 are Cytoplasmic-facing; that stretch reads MDTTRYSKWGGSSEEVPGGPWGRWVHWSRRP. Serine 12 is modified (phosphoserine). A helical; Signal-anchor for type II membrane protein transmembrane segment spans residues 32–52; sequence LFLALAVLVTTVLWAVILSIL. The Extracellular segment spans residues 53–293; the sequence is LSKASTERAA…GWICEKRHNC (241 aa). N-linked (GlcNAc...) asparagine glycosylation occurs at asparagine 73. The stretch at 96-136 forms a coiled coil; it reads SGTQAQLQTTRAELGEAQAKLMEQESALRELRERVTQGLAE. N-linked (GlcNAc...) asparagine glycosylation occurs at asparagine 159. A C-type lectin domain is found at 172–287; the sequence is FEGSCYFFSV…CDSEKDGWIC (116 aa). A disulfide bridge links cysteine 264 with cysteine 278.

In terms of assembly, (Microbial infection) Interacts with Japanese encephalitis virus envelope protein E. As to quaternary structure, (Microbial infection) Interacts with ebolavirus glycoprotein. (Microbial infection) Interacts with SARS-CoV spike glycoprotein. In terms of assembly, (Microbial infection) Interacts with lassa virus and Lymphocytic choriomeningitis virus glycoprotein. Expressed exclusively in fetal and adult liver and in lymph nodes. Specifically expressed by endothelial cells lining lymph node and liver sinuses (at protein level).

Its subcellular location is the cell membrane. Its function is as follows. Binds mannose, N-acetylglucosamine (GlcNAc) and fucose, but not galactose, in a Ca(2+)-dependent manner, in vitro. (Microbial infection) Acts as a receptor for Japanese encephalitis virus. Functionally, (Microbial infection) Acts as a receptor for Ebolavirus. In terms of biological role, (Microbial infection) Acts as a receptor for SARS-CoV. Its function is as follows. (Microbial infection) Acts as a receptor for Lassa virus and Lymphocytic choriomeningitis virus glycoprotein. This is C-type lectin domain family 4 member G (CLEC4G) from Homo sapiens (Human).